The chain runs to 228 residues: Translation initiation factor 6 (228 aa).

Belongs to the eIF-6 family.

Functionally, binds to the 50S ribosomal subunit and prevents its association with the 30S ribosomal subunit to form the 70S initiation complex. The polypeptide is Translation initiation factor 6 (Thermococcus onnurineus (strain NA1)).